The primary structure comprises 746 residues: Protein Niban 2 (746 aa).

Gly-2 carries the N-myristoyl glycine lipid modification. The PH domain occupies 68-192; the sequence is RIVFSGNLFQ…WQAVLQDCIR (125 aa). Phosphoserine occurs at positions 568, 574, 601, and 603. Positions 590–746 are disordered; that stretch reads GEEYSNSGGG…EDSAGVQTEF (157 aa). At Thr-606 the chain carries Phosphothreonine. Phosphoserine occurs at positions 609, 624, 638, 641, 646, 665, 681, 692, and 696. Low complexity predominate over residues 671 to 693; that stretch reads PLLNGAPAGESPQPKAAPEASSP. The segment covering 720–746 has biased composition (polar residues); it reads GEQVSSPSSHPALHTTTEDSAGVQTEF.

The protein belongs to the Niban family. Phosphorylated at Ser-641, Ser-646, Ser-692 and Ser-696 by the BRAF/MKK/ERK signaling cascade. In melanoma cells, the C-terminal phosphorylation may prevent targeting to the plasma membrane. In terms of processing, as apoptosis proceeds, degraded via an proteasome-independent pathway, probably by caspases.

The protein resides in the cytoplasm. Its subcellular location is the cytosol. It is found in the cell junction. The protein localises to the adherens junction. It localises to the membrane. May play a role in apoptosis suppression. May promote melanoma cell invasion in vitro. The polypeptide is Protein Niban 2 (Homo sapiens (Human)).